The sequence spans 301 residues: Ribosome-inactivating protein (301 aa).

A propeptide spans 1–16 (or 12 (in 10% of the molecules)); sequence MAEITLEPSDLMAQTN. A propeptide spanning residues 162–186 is cleaved from the precursor; sequence MATLEEEEVKMQMQMPEAADLAAAA. Glu207 is a catalytic residue. A propeptide spanning residues 258–301 is cleaved from the precursor; the sequence is VIPDMQKLGIKDKNEAARIVALVKNQTTAAAATAASADNDDDEA.

The protein belongs to the ribosome-inactivating protein family. Type 1 RIP subfamily. Synthesized and stored in the kernel as a 34 kDa inactive precursor. During germination, this neutral precursor is converted into a basic, active form by limited proteolysis, which removes 25 AA of net charge -6 from the center of the polypeptide chain. Additional processing also occurs at the N- and C-termini of the polypeptide. A two-chain active RIP (comprised of 16.5 and 8.5 kDa fragments that remain tightly associated) is produced from this processing event.

The catalysed reaction is Endohydrolysis of the N-glycosidic bond at one specific adenosine on the 28S rRNA.. Functionally, potent catalytic inactivator of eukaryotic protein synthesis. It may be a component of natural defense mechanisms involved in protecting the kernel against soil-borne fungal infections. The polypeptide is Ribosome-inactivating protein (Zea mays (Maize)).